The primary structure comprises 147 residues: Large ribosomal subunit protein uL13 (147 aa).

It belongs to the universal ribosomal protein uL13 family. In terms of assembly, part of the 50S ribosomal subunit.

Its function is as follows. This protein is one of the early assembly proteins of the 50S ribosomal subunit, although it is not seen to bind rRNA by itself. It is important during the early stages of 50S assembly. This chain is Large ribosomal subunit protein uL13, found in Lactiplantibacillus plantarum (strain ATCC BAA-793 / NCIMB 8826 / WCFS1) (Lactobacillus plantarum).